A 101-amino-acid chain; its full sequence is NADH-quinone oxidoreductase subunit K (101 aa).

A run of 3 helical transmembrane segments spans residues 4–24, 30–50, and 61–81; these read LTHY…GIFM, LVLL…FIAF, and IFVF…LAIM.

It belongs to the complex I subunit 4L family. As to quaternary structure, NDH-1 is composed of 14 different subunits. Subunits NuoA, H, J, K, L, M, N constitute the membrane sector of the complex.

It localises to the cell inner membrane. It carries out the reaction a quinone + NADH + 5 H(+)(in) = a quinol + NAD(+) + 4 H(+)(out). NDH-1 shuttles electrons from NADH, via FMN and iron-sulfur (Fe-S) centers, to quinones in the respiratory chain. The immediate electron acceptor for the enzyme in this species is believed to be ubiquinone. Couples the redox reaction to proton translocation (for every two electrons transferred, four hydrogen ions are translocated across the cytoplasmic membrane), and thus conserves the redox energy in a proton gradient. In Neisseria meningitidis serogroup B (strain ATCC BAA-335 / MC58), this protein is NADH-quinone oxidoreductase subunit K.